Here is a 210-residue protein sequence, read N- to C-terminus: Ion-translocating oxidoreductase complex subunit G (210 aa).

The helical transmembrane segment at 9 to 29 (GVTLAVFAAITTGLTAVINAV) threads the bilayer. Thr-175 is subject to FMN phosphoryl threonine.

It belongs to the RnfG family. In terms of assembly, the complex is composed of six subunits: RnfA, RnfB, RnfC, RnfD, RnfE and RnfG. FMN serves as cofactor.

It is found in the cell inner membrane. Functionally, part of a membrane-bound complex that couples electron transfer with translocation of ions across the membrane. This Erwinia tasmaniensis (strain DSM 17950 / CFBP 7177 / CIP 109463 / NCPPB 4357 / Et1/99) protein is Ion-translocating oxidoreductase complex subunit G.